A 680-amino-acid polypeptide reads, in one-letter code: MIDRYKHQQLRIGSVSPQQIINWGKKILPNGEIVGEVTKPYTFHYKTNKPEKDGLFCERISGPIKSGICACGNYRVIGDKKEDPKFCEQCGVEFVDSRIRRYQMGYIKLACPVTHVWYLKRLPSYIANLLDKPLKELEGLVYCDFSFARPIAKKPTFLRLRGSFEYEIQSRKYSIPLFFTTQGFDTFRNREIATGAGAIREQLADLDLRIIIDHSLVEWKELGEEGSTGNEWEDRKIRRRKDFLVRRMELAKHFIRTNIEPERMVLCLLPVLPPELRPIIQIDGGKPMSSDINELYRRVIYRNNTLTDLLTTSRSTPGESVMCQEKLVQEAVDTLLDNGIRGQPMRDGHNKVYKSFSDVIEGKEGRFRETLLGKRVDYSGRSVIVVGPSLSLHRCGLPREIAIELFQTFVIRGLIRQQIASNIGIAKSKIREKEPIVWEILQEVMQGHPVLLNRAPTLHRLGIQAFQPILVEGRAICLHPLVRKGFNADFDGDQMAVHVPLSLEAQAEARLLMFSHMNLLSPAMGDPISVPTQDMLIGLYVLTIGNRRGICANRYNSCNRGKYQNETKNNSKYTKAKEPYFSSAYDALGAYRQKRINLDNPLWLRWRLDQRAIASREVPIEVQYESLGTYHEIYGQYLIVRSVKKEILCIYIRTTVGHISFYREIEEAIQGFCRAYSYGT.

Positions 69, 71, 87, and 90 each coordinate Zn(2+). Mg(2+) is bound by residues Asp-489, Asp-491, and Asp-493.

This sequence belongs to the RNA polymerase beta' chain family. RpoC1 subfamily. In terms of assembly, in plastids the minimal PEP RNA polymerase catalytic core is composed of four subunits: alpha, beta, beta', and beta''. When a (nuclear-encoded) sigma factor is associated with the core the holoenzyme is formed, which can initiate transcription. Requires Mg(2+) as cofactor. It depends on Zn(2+) as a cofactor.

It is found in the plastid. The protein resides in the chloroplast. It carries out the reaction RNA(n) + a ribonucleoside 5'-triphosphate = RNA(n+1) + diphosphate. In terms of biological role, DNA-dependent RNA polymerase catalyzes the transcription of DNA into RNA using the four ribonucleoside triphosphates as substrates. The chain is DNA-directed RNA polymerase subunit beta' from Ceratophyllum demersum (Rigid hornwort).